Consider the following 447-residue polypeptide: Trigger factor (447 aa).

Residues 164 to 249 (GDLVVIDFIG…VKEVKQAVVP (86 aa)) form the PPIase FKBP-type domain.

The protein belongs to the FKBP-type PPIase family. Tig subfamily.

The protein localises to the cytoplasm. The enzyme catalyses [protein]-peptidylproline (omega=180) = [protein]-peptidylproline (omega=0). Functionally, involved in protein export. Acts as a chaperone by maintaining the newly synthesized protein in an open conformation. Functions as a peptidyl-prolyl cis-trans isomerase. In Rhodospirillum rubrum (strain ATCC 11170 / ATH 1.1.1 / DSM 467 / LMG 4362 / NCIMB 8255 / S1), this protein is Trigger factor.